The sequence spans 41 residues: Photosystem I reaction center subunit IX (41 aa).

Residues Tyr7–Ile27 form a helical membrane-spanning segment.

This sequence belongs to the PsaJ family.

It is found in the plastid. The protein localises to the chloroplast thylakoid membrane. Functionally, may help in the organization of the PsaE and PsaF subunits. The chain is Photosystem I reaction center subunit IX from Chlorella vulgaris (Green alga).